The chain runs to 810 residues: Sister chromatid cohesion 1 protein 2 (810 aa).

Disordered regions lie at residues 200–244, 273–315, and 606–626; these read RDTT…LLEP, SHES…SECG, and MGASSTTSGTAHQTENAAETP. Basic and acidic residues-rich tracts occupy residues 220-234 and 273-310; these read EPSRDHQNASRHRED and SHESSGDNLHRDGHTENLESEKTSKKTSCEEMQHDRSL. Over residues 606-622 the composition is skewed to polar residues; sequence MGASSTTSGTAHQTENA.

Belongs to the rad21 family. Component of the cohesin complex. As to expression, low expression in shoots, buds, siliques, leaves and roots. Found in, but not limited to, actively dividing cells: in procambium, protoderm and ground meristem in roots, and in shoot and floral meristems.

It is found in the nucleus. Functionally, may be involved in sister chromatid cohesion during mitosis. The polypeptide is Sister chromatid cohesion 1 protein 2 (SYN2) (Arabidopsis thaliana (Mouse-ear cress)).